Here is a 229-residue protein sequence, read N- to C-terminus: Non-structural protein P8 (229 aa).

The next 2 helical transmembrane spans lie at 119–139 (IIHM…VCTL) and 162–182 (SLNP…MVCA).

Belongs to the orbivirus NS3 family. In terms of assembly, forms homooligomers via coiled-coil motif. Interacts with host OPTN; this interaction inhibits innate immune response.

It is found in the host cell membrane. Its subcellular location is the host Golgi apparatus. In terms of biological role, plays a role in the inhibition of host innate immune response. Interacts with host OPTN and thus inhibits the recruitment of TBK1 to the host Golgi apparatus. In turn, downstream partner IRF3 cannot be activated and IFN-beta production is impaired. Functionally, facilitates viral particle release either by increasing plasma membrane permeability through a viroporin-like activity or by viral budding. The polypeptide is Non-structural protein P8 (Segment-10) (Antilocapra americana (Pronghorn)).